A 96-amino-acid chain; its full sequence is uncharacterized protein (96 aa).

This is an uncharacterized protein from Escherichia coli O157:H7.